The chain runs to 332 residues: Casein kinase II subunit alpha (332 aa).

The region spanning 43–327 (YEIIRKVGRG…TCQEAMAHPY (285 aa)) is the Protein kinase domain. ATP-binding positions include 49–57 (VGRGKYSEV) and K72. Catalysis depends on D160, which acts as the Proton acceptor.

It belongs to the protein kinase superfamily. Ser/Thr protein kinase family. CK2 subfamily. Tetramer composed of two alpha chains, one beta chain and one beta' chain.

It catalyses the reaction L-seryl-[protein] + ATP = O-phospho-L-seryl-[protein] + ADP + H(+). The catalysed reaction is L-threonyl-[protein] + ATP = O-phospho-L-threonyl-[protein] + ADP + H(+). Its function is as follows. Catalytic subunit of a constitutively active serine/threonine-protein kinase complex that phosphorylates a large number of substrates containing acidic residues C-terminal to the phosphorylated serine or threonine. The protein is Casein kinase II subunit alpha of Schizosaccharomyces pombe (strain 972 / ATCC 24843) (Fission yeast).